We begin with the raw amino-acid sequence, 543 residues long: CTP synthase (543 aa).

The tract at residues 1 to 265 is amidoligase domain; the sequence is MARYIFITGG…DDEVLAAFGI (265 aa). CTP is bound at residue Ser-13. Ser-13 is a binding site for UTP. 14–19 is an ATP binding site; sequence SLGKGL. Tyr-54 is an L-glutamine binding site. Position 71 (Asp-71) interacts with ATP. Positions 71 and 139 each coordinate Mg(2+). Residues 146 to 148, 186 to 191, and Lys-222 each bind CTP; these read DIE and KTKPTQ. Residues 186–191 and Lys-222 each bind UTP; that span reads KTKPTQ. Residue 238 to 240 participates in ATP binding; it reads RDV. Residues 291–542 form the Glutamine amidotransferase type-1 domain; sequence TIAIVGKYTG…IQAAVVQSRL (252 aa). Gly-353 is an L-glutamine binding site. Cys-380 functions as the Nucleophile; for glutamine hydrolysis in the catalytic mechanism. Residues 381 to 384, Glu-404, and Arg-470 contribute to the L-glutamine site; that span reads FGMQ. Residues His-515 and Glu-517 contribute to the active site.

It belongs to the CTP synthase family. In terms of assembly, homotetramer.

It carries out the reaction UTP + L-glutamine + ATP + H2O = CTP + L-glutamate + ADP + phosphate + 2 H(+). The catalysed reaction is L-glutamine + H2O = L-glutamate + NH4(+). The enzyme catalyses UTP + NH4(+) + ATP = CTP + ADP + phosphate + 2 H(+). It functions in the pathway pyrimidine metabolism; CTP biosynthesis via de novo pathway; CTP from UDP: step 2/2. Allosterically activated by GTP, when glutamine is the substrate; GTP has no effect on the reaction when ammonia is the substrate. The allosteric effector GTP functions by stabilizing the protein conformation that binds the tetrahedral intermediate(s) formed during glutamine hydrolysis. Inhibited by the product CTP, via allosteric rather than competitive inhibition. Catalyzes the ATP-dependent amination of UTP to CTP with either L-glutamine or ammonia as the source of nitrogen. Regulates intracellular CTP levels through interactions with the four ribonucleotide triphosphates. The protein is CTP synthase of Bradyrhizobium sp. (strain BTAi1 / ATCC BAA-1182).